A 410-amino-acid chain; its full sequence is Histidine--tRNA ligase (410 aa).

This sequence belongs to the class-II aminoacyl-tRNA synthetase family.

It localises to the cytoplasm. It carries out the reaction tRNA(His) + L-histidine + ATP = L-histidyl-tRNA(His) + AMP + diphosphate + H(+). The polypeptide is Histidine--tRNA ligase (Methanoregula boonei (strain DSM 21154 / JCM 14090 / 6A8)).